Consider the following 129-residue polypeptide: uncharacterized protein (129 aa).

3 helical membrane passes run 22–42, 55–75, and 88–108; these read LASS…FFFF, VGSF…FFFF, and LPFT…FFFF.

Its subcellular location is the membrane. This is an uncharacterized protein from Saccharomyces cerevisiae (strain ATCC 204508 / S288c) (Baker's yeast).